Consider the following 73-residue polypeptide: Large ribosomal subunit protein bL31 (73 aa).

This sequence belongs to the bacterial ribosomal protein bL31 family. Type A subfamily. In terms of assembly, part of the 50S ribosomal subunit.

Its function is as follows. Binds the 23S rRNA. In Synechococcus sp. (strain JA-3-3Ab) (Cyanobacteria bacterium Yellowstone A-Prime), this protein is Large ribosomal subunit protein bL31.